A 650-amino-acid chain; its full sequence is Aminopeptidase B (650 aa).

At Ser-7 the chain carries Phosphoserine. A substrate-binding site is contributed by 298–302 (GGMEN). His-325 is a binding site for Zn(2+). Glu-326 serves as the catalytic Proton acceptor. The Zn(2+) site is built by His-329 and Glu-348. Lys-446 carries the post-translational modification N6-acetyllysine.

The protein belongs to the peptidase M1 family. Monomer. Zn(2+) is required as a cofactor. As to expression, widely expressed.

It localises to the secreted. The enzyme catalyses Release of N-terminal Arg and Lys from oligopeptides when P1' is not Pro. Also acts on arylamides of Arg and Lys.. Exopeptidase which selectively removes arginine and/or lysine residues from the N-terminus of several peptide substrates including Arg(0)-Leu-enkephalin, Arg(0)-Met-enkephalin and Arg(-1)-Lys(0)-somatostatin-14. Can hydrolyze leukotriene A4 (LTA-4) into leukotriene B4 (LTB-4). In Rattus norvegicus (Rat), this protein is Aminopeptidase B (Rnpep).